Reading from the N-terminus, the 260-residue chain is Cytosolic Fe-S cluster assembly factor Nubp2 homolog (260 aa).

14 to 21 (GKGGVGKS) is an ATP binding site. [4Fe-4S] cluster contacts are provided by C188 and C191.

It belongs to the Mrp/NBP35 ATP-binding proteins family. NUBP2/CFD1 subfamily. In terms of assembly, heterotetramer of 2 Nubp1 and 2 Nubp2 chains. The cofactor is [4Fe-4S] cluster.

The protein localises to the cytoplasm. Functionally, component of the cytosolic iron-sulfur (Fe/S) protein assembly (CIA) machinery. Required for maturation of extramitochondrial Fe-S proteins. The Nubp1-Nubp2 heterotetramer forms a Fe-S scaffold complex, mediating the de novo assembly of an Fe-S cluster and its transfer to target apoproteins. This Drosophila simulans (Fruit fly) protein is Cytosolic Fe-S cluster assembly factor Nubp2 homolog.